The following is a 350-amino-acid chain: N-acetyl-gamma-glutamyl-phosphate reductase (350 aa).

The active site involves C153.

It belongs to the NAGSA dehydrogenase family. Type 1 subfamily.

It localises to the cytoplasm. It carries out the reaction N-acetyl-L-glutamate 5-semialdehyde + phosphate + NADP(+) = N-acetyl-L-glutamyl 5-phosphate + NADPH + H(+). The protein operates within amino-acid biosynthesis; L-arginine biosynthesis; N(2)-acetyl-L-ornithine from L-glutamate: step 3/4. Its function is as follows. Catalyzes the NADPH-dependent reduction of N-acetyl-5-glutamyl phosphate to yield N-acetyl-L-glutamate 5-semialdehyde. This is N-acetyl-gamma-glutamyl-phosphate reductase from Thermosynechococcus vestitus (strain NIES-2133 / IAM M-273 / BP-1).